The following is a 359-amino-acid chain: Nicotinate-nucleotide--dimethylbenzimidazole phosphoribosyltransferase (359 aa).

The active-site Proton acceptor is Glu318.

This sequence belongs to the CobT family. As to quaternary structure, homodimer.

The catalysed reaction is 5,6-dimethylbenzimidazole + nicotinate beta-D-ribonucleotide = alpha-ribazole 5'-phosphate + nicotinate + H(+). Its pathway is nucleoside biosynthesis; alpha-ribazole biosynthesis; alpha-ribazole from 5,6-dimethylbenzimidazole: step 1/2. Catalyzes the synthesis of alpha-ribazole-5'-phosphate from nicotinate mononucleotide (NAMN) and 5,6-dimethylbenzimidazole (DMB). The polypeptide is Nicotinate-nucleotide--dimethylbenzimidazole phosphoribosyltransferase (Escherichia coli (strain ATCC 8739 / DSM 1576 / NBRC 3972 / NCIMB 8545 / WDCM 00012 / Crooks)).